The following is a 429-amino-acid chain: Histidine--tRNA ligase (429 aa).

Belongs to the class-II aminoacyl-tRNA synthetase family. Homodimer.

The protein resides in the cytoplasm. It carries out the reaction tRNA(His) + L-histidine + ATP = L-histidyl-tRNA(His) + AMP + diphosphate + H(+). This Chlorobium phaeobacteroides (strain DSM 266 / SMG 266 / 2430) protein is Histidine--tRNA ligase.